The primary structure comprises 182 residues: MSKKVIEDTSKFLSYVLRHEPQAIGLELDSEGWGDIDALISGAAKNGRQLSRELIELVVEGNDKKRFALSADSRRIRAVQGHSNKAVQLQLEAKQPPAVLFHGTATRFMDSINEKGLIPGSRHHVHLSQEIDTARAVGQRYGKVVILQIDAQAMQAQGFTFYQAENGVWLTDQVPVGFIKAL.

This sequence belongs to the KptA/TPT1 family.

Functionally, removes the 2'-phosphate from RNA via an intermediate in which the phosphate is ADP-ribosylated by NAD followed by a presumed transesterification to release the RNA and generate ADP-ribose 1''-2''-cyclic phosphate (APPR&gt;P). May function as an ADP-ribosylase. The protein is Probable RNA 2'-phosphotransferase of Pseudomonas fluorescens (strain ATCC BAA-477 / NRRL B-23932 / Pf-5).